The sequence spans 764 residues: 5-methyltetrahydropteroyltriglutamate--homocysteine methyltransferase (764 aa).

Residues 16–19 and Lys-115 contribute to the 5-methyltetrahydropteroyltri-L-glutamate site; that span reads RELK. Residues 435 to 437 and Glu-488 each bind L-homocysteine; that span reads IGS. L-methionine contacts are provided by residues 435-437 and Glu-488; that span reads IGS. 5-methyltetrahydropteroyltri-L-glutamate is bound by residues 519–520 and Trp-565; that span reads RC. Asp-603 contributes to the L-homocysteine binding site. L-methionine is bound at residue Asp-603. A 5-methyltetrahydropteroyltri-L-glutamate-binding site is contributed by Glu-609. Residues His-645, Cys-647, and Glu-669 each coordinate Zn(2+). The Proton donor role is filled by His-698. Cys-730 lines the Zn(2+) pocket.

This sequence belongs to the vitamin-B12 independent methionine synthase family. The cofactor is Zn(2+).

It carries out the reaction 5-methyltetrahydropteroyltri-L-glutamate + L-homocysteine = tetrahydropteroyltri-L-glutamate + L-methionine. Its pathway is amino-acid biosynthesis; L-methionine biosynthesis via de novo pathway; L-methionine from L-homocysteine (MetE route): step 1/1. Functionally, catalyzes the transfer of a methyl group from 5-methyltetrahydrofolate to homocysteine resulting in methionine formation. The polypeptide is 5-methyltetrahydropteroyltriglutamate--homocysteine methyltransferase (Burkholderia mallei (strain NCTC 10247)).